We begin with the raw amino-acid sequence, 639 residues long: ATP-dependent zinc metalloprotease FtsH (639 aa).

Over 1-4 the chain is Cytoplasmic; the sequence is MNST. The chain crosses the membrane as a helical span at residues 5 to 25; it reads VKTIVFWVFILACCILLWQVF. At 26 to 104 the chain is on the periplasmic side; the sequence is QRSSNTGKEQ…TVKDNSGSPW (79 aa). The chain crosses the membrane as a helical span at residues 105 to 125; the sequence is WSILIQFSPVLVLVALWFFMI. Residues 126–639 lie on the Cytoplasmic side of the membrane; it reads RQMQSGGNKA…GLPEGSPSPA (514 aa). Position 196–203 (196–203) interacts with ATP; it reads GPPGTGKT. Residue His418 participates in Zn(2+) binding. Residue Glu419 is part of the active site. Zn(2+) is bound by residues His422 and Asp494. The segment at 597-639 is disordered; that stretch reads KDLPPLKPSGGSGTATTDDVQQVLKPSSDRGAGGLPEGSPSPA.

In the central section; belongs to the AAA ATPase family. This sequence in the C-terminal section; belongs to the peptidase M41 family. Homohexamer. It depends on Zn(2+) as a cofactor.

The protein resides in the cell inner membrane. Its function is as follows. Acts as a processive, ATP-dependent zinc metallopeptidase for both cytoplasmic and membrane proteins. Plays a role in the quality control of integral membrane proteins. The sequence is that of ATP-dependent zinc metalloprotease FtsH from Acidobacterium capsulatum (strain ATCC 51196 / DSM 11244 / BCRC 80197 / JCM 7670 / NBRC 15755 / NCIMB 13165 / 161).